We begin with the raw amino-acid sequence, 168 residues long: Photosystem I assembly protein Ycf3 (168 aa).

3 TPR repeats span residues 35–68 (AFTYYRDGMSAQSEGNYAEALQNYYEATRLEIDP), 72–105 (SYILYNIGLIHTSNGEHTKALEYYSRALERNPFL), and 120–153 (GEQAIRQGDSEIAEAWSDQAAEYWKQAIALTPGN).

Belongs to the Ycf3 family.

The protein localises to the plastid. It localises to the chloroplast thylakoid membrane. In terms of biological role, essential for the assembly of the photosystem I (PSI) complex. May act as a chaperone-like factor to guide the assembly of the PSI subunits. In Buxus microphylla (Littleleaf boxwood), this protein is Photosystem I assembly protein Ycf3.